Reading from the N-terminus, the 612-residue chain is Arginine--tRNA ligase (612 aa).

The short motif at 152–162 (PNIAKEMHVGH) is the 'HIGH' region element.

It belongs to the class-I aminoacyl-tRNA synthetase family. Monomer.

It localises to the cytoplasm. The enzyme catalyses tRNA(Arg) + L-arginine + ATP = L-arginyl-tRNA(Arg) + AMP + diphosphate. The polypeptide is Arginine--tRNA ligase (Prochlorococcus marinus (strain MIT 9313)).